Reading from the N-terminus, the 838-residue chain is Urease (838 aa).

The region spanning 402-838 (GGFDTHIHFI…LPLTQDYFVY (437 aa)) is the Urease domain. Ni(2+) contacts are provided by H407, H409, and K490. K490 carries the N6-carboxylysine modification. A substrate-binding site is contributed by H492. The Ni(2+) site is built by H519 and H545. H593 (proton donor) is an active-site residue. D633 contacts Ni(2+).

In the C-terminal section; belongs to the metallo-dependent hydrolases superfamily. Urease alpha subunit family. Homohexamer. It depends on Ni cation as a cofactor. In terms of processing, carboxylation allows a single lysine to coordinate two nickel ions.

It catalyses the reaction urea + 2 H2O + H(+) = hydrogencarbonate + 2 NH4(+). Its pathway is nitrogen metabolism; urea degradation; CO(2) and NH(3) from urea (urease route): step 1/1. The chain is Urease (ure1) from Aspergillus fumigatus (strain ATCC MYA-4609 / CBS 101355 / FGSC A1100 / Af293) (Neosartorya fumigata).